The following is an 80-amino-acid chain: Pancreatic polypeptide (80 aa).

The first 25 residues, 1 to 25 (MPPRWASLLLLACSLLLLAVPPGTA), serve as a signal peptide directing secretion. Tyr-61 is subject to Tyrosine amide. Residues 65–80 (SSSRVLCEEPMGAAGC) constitute a propeptide that is removed on maturation.

The protein belongs to the NPY family.

The protein resides in the secreted. Its function is as follows. Hormone secreted by pancreatic cells that acts as a regulator of pancreatic and gastrointestinal functions. In Gallus gallus (Chicken), this protein is Pancreatic polypeptide (PPY).